A 394-amino-acid chain; its full sequence is Alanine--glyoxylate aminotransferase (394 aa).

Residues alanine 76–histidine 78, serine 153, and glutamine 204 contribute to the pyridoxal 5'-phosphate site. Position 153 (serine 153) interacts with substrate. Position 205 is an N6-(pyridoxal phosphate)lysine (lysine 205). 2 residues coordinate pyridoxal 5'-phosphate: tyrosine 256 and threonine 259. Residue arginine 356 participates in substrate binding.

This sequence belongs to the class-V pyridoxal-phosphate-dependent aminotransferase family. In terms of assembly, homodimer. Pyridoxal 5'-phosphate serves as cofactor.

The protein resides in the peroxisome. It catalyses the reaction glyoxylate + L-alanine = glycine + pyruvate. The catalysed reaction is (2S)-2-aminobutanoate + glyoxylate = 2-oxobutanoate + glycine. It carries out the reaction glyoxylate + L-phenylalanine = 3-phenylpyruvate + glycine. The enzyme catalyses glyoxylate + L-serine = 3-hydroxypyruvate + glycine. It catalyses the reaction 2-oxobutanoate + L-alanine = (2S)-2-aminobutanoate + pyruvate. The catalysed reaction is L-phenylalanine + pyruvate = 3-phenylpyruvate + L-alanine. It carries out the reaction L-serine + pyruvate = 3-hydroxypyruvate + L-alanine. In terms of biological role, catalyzes the pyridoxal 5'-phosphate-dependent transamination of alanine with glyoxylate as an amino group acceptor. Can also catalyze, although with much less efficiency, the transamination of amino-butyrate, phenylalanine and serine with glyoxylate or pyruvate as an amino group acceptor. Does not catalyze the transamination of both 3-hydroxykynurenine and L-kynurenine. May play a role in the detoxification of glyoxylate, a toxic plant metabolite from the fly diet. The chain is Alanine--glyoxylate aminotransferase from Drosophila melanogaster (Fruit fly).